Here is a 209-residue protein sequence, read N- to C-terminus: Kynurenine formamidase (209 aa).

Substrate is bound at residue Trp-20. The Zn(2+) site is built by His-50, His-54, and Asp-56. His-60 acts as the Proton donor/acceptor in catalysis. The Zn(2+) site is built by His-161 and Glu-173.

Belongs to the Cyclase 1 superfamily. KynB family. In terms of assembly, homodimer. Zn(2+) is required as a cofactor.

The enzyme catalyses N-formyl-L-kynurenine + H2O = L-kynurenine + formate + H(+). Its pathway is amino-acid degradation; L-tryptophan degradation via kynurenine pathway; L-kynurenine from L-tryptophan: step 2/2. In terms of biological role, catalyzes the hydrolysis of N-formyl-L-kynurenine to L-kynurenine, the second step in the kynurenine pathway of tryptophan degradation. In Bacillus anthracis, this protein is Kynurenine formamidase.